The following is a 268-amino-acid chain: uncharacterized protein (268 aa).

Residues 132–159 adopt a coiled-coil conformation; it reads DELDEKIIEFDTKMNEILEELLEDVEVE.

This is an uncharacterized protein from Methanocaldococcus jannaschii (strain ATCC 43067 / DSM 2661 / JAL-1 / JCM 10045 / NBRC 100440) (Methanococcus jannaschii).